The primary structure comprises 2507 residues: Putative neurobeachin homolog (2507 aa).

3 disordered regions span residues 1 to 109 (MEIS…PPLP), 1307 to 1377 (PSSP…DGGR), and 1629 to 1649 (SRHEEANLPEGEKNEEPEISE). The span at 24–37 (PVEEGEEVNDEESN) shows a compositional bias: acidic residues. Residues 1317–1340 (TTQKQENSENVNSETSPENGSNGK) are compositionally biased toward polar residues. A compositionally biased stretch (acidic residues) spans 1360–1372 (DGEEEENGEEGQG). Positions 1690–1798 (PSSQSACFST…AVKKVVYQLP (109 aa)) constitute a BEACH-type PH domain. The 290-residue stretch at 1817–2106 (MTPRQLFKHS…QLLTEAHPPR (290 aa)) folds into the BEACH domain. 4 WD repeats span residues 2265–2308 (GHGD…GFIA), 2326–2365 (GHEASISALCVSAEHGLVVSGCEDGVILIHTTSSDLLRRI), 2405–2444 (LVDDKIECVTVTRDGEFAVTGAVNGRINIWRMFPLTKLYT), and 2447–2486 (PLNSAVRSVAVVASHRFILGGLDSGAIVVFNADFNRWHYE).

This sequence belongs to the WD repeat neurobeachin family. In terms of assembly, interacts with RII subunit of PKA. As to expression, expressed in vulval precursor cells and rectal epithelia in L2 and L3 larvae. In L4 larvae, expression is seen in intestinal epithelial cells.

It is found in the cytoplasm. The protein resides in the membrane. The protein localises to the nucleus. In terms of biological role, binds to type II regulatory subunits of protein kinase A and anchors/targets them to the membrane. May anchor the kinase to cytoskeletal and/or organelle-associated proteins. Regulates endosomal traffic in polarized epithelial cells such as the vulval precursor cells and intestinal cells. Thought to act as a negative regulator of lin-12 activity in vulval precursor cells. May have a role in the internalization process from basolateral surface of polarized epithelial cells. The sequence is that of Putative neurobeachin homolog (sel-2) from Caenorhabditis elegans.